Here is a 116-residue protein sequence, read N- to C-terminus: Alpha-amylase inhibitor 5 (116 aa).

Intrachain disulfides connect C4-C55, C18-C44, C27-C77, C45-C95, and C57-C106.

The protein belongs to the protease inhibitor I6 (cereal trypsin/alpha-amylase inhibitor) family.

It is found in the secreted. Functionally, alpha-amylase inhibitor. In Sorghum bicolor (Sorghum), this protein is Alpha-amylase inhibitor 5.